Reading from the N-terminus, the 131-residue chain is Cytochrome c-552 (131 aa).

Residues cysteine 11, cysteine 14, histidine 15, and methionine 69 each contribute to the heme c site.

In terms of processing, binds 1 heme c group covalently per subunit.

This monoheme basic protein appears to function as an electron donor to cytochrome oxidase in T.thermophilus. The protein is Cytochrome c-552 (cycA) of Thermus thermophilus.